The primary structure comprises 118 residues: UPF0102 protein Swit_0572 (118 aa).

Belongs to the UPF0102 family.

In Rhizorhabdus wittichii (strain DSM 6014 / CCUG 31198 / JCM 15750 / NBRC 105917 / EY 4224 / RW1) (Sphingomonas wittichii), this protein is UPF0102 protein Swit_0572.